Here is a 168-residue protein sequence, read N- to C-terminus: Mesencephalic astrocyte-derived neurotrophic factor homolog (168 aa).

Positions 1-17 (MSRLVLLISLVIVVASA) are cleaved as a signal peptide. Disulfide bonds link cysteine 22/cysteine 109, cysteine 25/cysteine 97, cysteine 55/cysteine 66, and cysteine 143/cysteine 146.

Belongs to the ARMET family. As to expression, expressed in the intestine, spermatheca and nervous system. Expressed in the hypoderm. Expressed in structures of the excretory system. Not expressed in the male gonad.

It localises to the secreted. The protein localises to the endoplasmic reticulum lumen. Functionally, inhibits endoplasmic reticulum (ER) stress response. Retained in the ER under normal conditions and is up-regulated and secreted by the ER in response to ER stress and hypoxia. Following secretion by the ER, directly binds to 3-O-sulfogalactosylceramide, a lipid sulfatide in the outer cell membrane of target cells. Sulfatide binding promotes its cellular uptake by endocytosis, and is required for its role in alleviating ER stress under ER stress conditions. Has a neuroprotective role, ensuring survival of dopaminergic neurons during normal growth. The chain is Mesencephalic astrocyte-derived neurotrophic factor homolog from Caenorhabditis elegans.